The sequence spans 197 residues: Probable GTP-binding protein EngB (197 aa).

The region spanning 22–195 (GYPEIALVGR…WNWIEAQAFG (174 aa)) is the EngB-type G domain. GTP-binding positions include 30-37 (GRSNVGKS), 57-61 (GKTQT), 75-78 (DVPG), 142-145 (TKSD), and 174-176 (FSA). 2 residues coordinate Mg(2+): Ser37 and Thr59.

It belongs to the TRAFAC class TrmE-Era-EngA-EngB-Septin-like GTPase superfamily. EngB GTPase family. Requires Mg(2+) as cofactor.

In terms of biological role, necessary for normal cell division and for the maintenance of normal septation. This is Probable GTP-binding protein EngB from Levilactobacillus brevis (strain ATCC 367 / BCRC 12310 / CIP 105137 / JCM 1170 / LMG 11437 / NCIMB 947 / NCTC 947) (Lactobacillus brevis).